The primary structure comprises 196 residues: MSVDEHLNQGTGEKQYRRRDLRNGLASRMGLGESTYRAREYGPSRRSRFRDRRDARPPPPTHQRVRFLNIPLDVSDYEIDDLLKDLPKPLYSKFYDHEDSRSAVFEFEDHSILDKCVELYNGLELHGAKITVEIFEQQGRFADSTRTNRSTDHVEKEAGFKTGRPRGKARATKKEKPPQPTLEDLDAELDAYMNGN.

Disordered regions lie at residues 1 to 63 (MSVD…PTHQ) and 143 to 196 (DSTR…MNGN). Residues 63-137 (QRVRFLNIPL…AKITVEIFEQ (75 aa)) enclose the RRM domain. Positions 149-159 (RSTDHVEKEAG) are enriched in basic and acidic residues.

It belongs to the YRA1 family. In terms of assembly, associates with mRNPs.

It localises to the nucleus. Functionally, involved in export of poly(A) mRNAs from the nucleus. Recruited to the coding sequences as well as poly-A sites of active genes. The chain is RNA annealing protein YRA2 (YRA2) from Eremothecium gossypii (strain ATCC 10895 / CBS 109.51 / FGSC 9923 / NRRL Y-1056) (Yeast).